The primary structure comprises 381 residues: Beta-lactamase CMY-2 (381 aa).

Residues 1–20 form the signal peptide; that stretch reads MMKKSLCCALLLTASFSTFA. The Acyl-ester intermediate role is filled by Ser84. Ser84, Gln140, Tyr170, and Asn172 together coordinate a beta-lactam.

The protein belongs to the class-C beta-lactamase family.

It catalyses the reaction a beta-lactam + H2O = a substituted beta-amino acid. With respect to regulation, inhibited by the beta-lactamase-blocking agents sulbactam, tazobactam, avibactam and 3-aminophenylboronic acid (APB). Its function is as follows. Class C beta-lactamase which confers resistance to penicillins and cephalosporins. Has nitrocefin-, cefoxitin- and cefoperazone-hydrolyzing activities. The chain is Beta-lactamase CMY-2 from Klebsiella pneumoniae.